The sequence spans 556 residues: Glycosyl hydrolase 5 family protein (556 aa).

Residues 1-28 (MTSAGVAPTALRLLTALLLLLVAAPSHS) form the signal peptide. Asparagine 102 and asparagine 113 each carry an N-linked (GlcNAc...) asparagine glycan. Glutamate 208 serves as the catalytic Proton donor/acceptor. 3 N-linked (GlcNAc...) asparagine glycosylation sites follow: asparagine 212, asparagine 290, and asparagine 307. The active-site Nucleophile is the glutamate 473. Asparagine 474 and asparagine 479 each carry an N-linked (GlcNAc...) asparagine glycan.

Belongs to the glycosyl hydrolase 5 (cellulase A) family. In terms of processing, glycosylated.

May have glycosyl hydrolase activity. This Chamaecyparis obtusa (Hinoki false-cypress) protein is Glycosyl hydrolase 5 family protein.